The following is a 257-amino-acid chain: Large ribosomal subunit protein uL2 (257 aa).

Residues 210–231 are disordered; it reads PHGGGNHQHIGKASTVKRGTSA.

It belongs to the universal ribosomal protein uL2 family.

Its subcellular location is the cytoplasm. In Mamestra brassicae (Cabbage moth), this protein is Large ribosomal subunit protein uL2 (RpL8).